We begin with the raw amino-acid sequence, 393 residues long: NADH-quinone oxidoreductase subunit D 2 (393 aa).

The protein belongs to the complex I 49 kDa subunit family. As to quaternary structure, NDH-1 is composed of 14 different subunits. Subunits NuoB, C, D, E, F, and G constitute the peripheral sector of the complex.

It is found in the cell inner membrane. The catalysed reaction is a quinone + NADH + 5 H(+)(in) = a quinol + NAD(+) + 4 H(+)(out). In terms of biological role, NDH-1 shuttles electrons from NADH, via FMN and iron-sulfur (Fe-S) centers, to quinones in the respiratory chain. The immediate electron acceptor for the enzyme in this species is believed to be a menaquinone. Couples the redox reaction to proton translocation (for every two electrons transferred, four hydrogen ions are translocated across the cytoplasmic membrane), and thus conserves the redox energy in a proton gradient. In Cytophaga hutchinsonii (strain ATCC 33406 / DSM 1761 / CIP 103989 / NBRC 15051 / NCIMB 9469 / D465), this protein is NADH-quinone oxidoreductase subunit D 2.